The following is a 146-amino-acid chain: Hemoglobin subunit beta (146 aa).

N-acetylvaline is present on valine 1. The 145-residue stretch at 2–146 folds into the Globin domain; sequence HLTNEEKTAV…VATALAHKYH (145 aa). Serine 44 bears the Phosphoserine mark. Lysine 59 is modified (N6-acetyllysine). Histidine 63 contributes to the heme b binding site. At lysine 82 the chain carries N6-acetyllysine. Histidine 92 contributes to the heme b binding site. At cysteine 93 the chain carries S-nitrosocysteine. Position 144 is an N6-acetyllysine (lysine 144).

Belongs to the globin family. As to quaternary structure, heterotetramer of two alpha chains and two beta chains. Red blood cells.

Its function is as follows. Involved in oxygen transport from the lung to the various peripheral tissues. This is Hemoglobin subunit beta (HBB) from Lyroderma lyra (Greater Asian false-vampire bat).